Consider the following 445-residue polypeptide: Sporulation protein YkvU (445 aa).

A run of 12 helical transmembrane segments spans residues 7–29 (GIILLSIAAFFAECLEFVVNMIL), 39–61 (GLYMSILPTIFLIIVIASLELPI), 82–104 (AFRMTAIFTAFSTAAASIALPFI), 109–131 (TYHPFIKGIVIGLIPVVAFTSIA), 144–166 (IAIANVLKKIIQLLCLFLFFQWY), 172–194 (MAVLISLFVLVVSDVVVLVYLYS), 237–259 (VNAIEPFLVKGALLAAGVAGTAA), 269–291 (VAVTIGSFPAFIAHSLMVVMIPS), 312–334 (IFITLGYGIPAVWVMFQFAGPLT), 349–371 (LLWPYFLFHLFVMPLQACLIGMG), 376–395 (AFYHNVWSHIVALSMMYVLG), and 400–422 (LQMLGIILGMNTGMILLTSLHYA).

It localises to the forespore membrane. The polypeptide is Sporulation protein YkvU (ykvU) (Bacillus subtilis (strain 168)).